We begin with the raw amino-acid sequence, 390 residues long: MAFDLAARLAERRAADLYRQRPLLQSPQGPQVVVDGQPLLAFCSNDYLGLANHPDVIQAWRAGAERWGVGGGASHLVIGHSTPHHQVEEALAELTGRPRALLFSTGYMANLGAITALVGQGDTVLQDRLNHASLLDGGLLSGARFSRYLHNDPASLASRLEKATGNTLVVTDGVFSMDGDCANLPALADVARARGAWLMVDDAHGLGTLGANGGGLLEQFGLGVDDVPVLIGTLGKACGTSGAFVVGSEELIEALVQFARPYIYTTSQPPALACATLKALELLRKDTWRREHLAALIRQFREGARQIGLTLMDSHTAIQPILIGDAGRAMALSRKLRERGLLVTAIRPPTVPVGSARLRVTLSAAHSEAQVQLLLNALAECYPQLESADA.

Arg-19 is a substrate binding site. 106-107 (GY) serves as a coordination point for pyridoxal 5'-phosphate. His-131 lines the substrate pocket. Residues Ser-176, His-204, and Thr-233 each coordinate pyridoxal 5'-phosphate. N6-(pyridoxal phosphate)lysine is present on Lys-236. Thr-350 lines the substrate pocket.

It belongs to the class-II pyridoxal-phosphate-dependent aminotransferase family. BioF subfamily. As to quaternary structure, homodimer. The cofactor is pyridoxal 5'-phosphate.

The enzyme catalyses 6-carboxyhexanoyl-[ACP] + L-alanine + H(+) = (8S)-8-amino-7-oxononanoate + holo-[ACP] + CO2. The protein operates within cofactor biosynthesis; biotin biosynthesis. Catalyzes the decarboxylative condensation of pimeloyl-[acyl-carrier protein] and L-alanine to produce 8-amino-7-oxononanoate (AON), [acyl-carrier protein], and carbon dioxide. This chain is 8-amino-7-oxononanoate synthase, found in Pseudomonas entomophila (strain L48).